Consider the following 822-residue polypeptide: Fibroblast growth factor receptor 4 (822 aa).

Positions 1-35 (MGVQKDSRDIRWNRTTRPLALLLCGLLAFSALSCA) are cleaved as a signal peptide. 3 N-linked (GlcNAc...) asparagine glycosylation sites follow: Asn-13, Asn-72, and Asn-125. Residues 36 to 388 (RTLPEGRKAN…AEGPETRYTD (353 aa)) lie on the Extracellular side of the membrane. Ig-like C2-type domains lie at 39-129 (PEGR…FTIS), 157-259 (PPYS…YLLD), and 268-368 (PILQ…AWLT). An intrachain disulfide couples Cys-69 to Cys-114. The disordered stretch occupies residues 136-166 (SGDDDDEDHGREDSAGDMGEDPPYSTSYRAP). Residues Cys-191 and Cys-243 are joined by a disulfide bond. N-linked (GlcNAc...) asparagine glycans are attached at residues Asn-240, Asn-277, Asn-309, Asn-330, and Asn-341. The cysteines at positions 290 and 352 are disulfide-linked. Residues 389–409 (IIIYTSGSLALLMAAVIVVLC) form a helical membrane-spanning segment. At 410 to 822 (RMQLPPTKTH…HHTTTSMVGT (413 aa)) the chain is on the cytoplasmic side. Residues 486–774 (LVLGKPLGEG…ILATVAEEYL (289 aa)) enclose the Protein kinase domain. ATP-binding positions include 492-500 (LGEGCFGQV) and Lys-522. The Proton acceptor role is filled by Asp-631. Tyr-661, Tyr-662, and Tyr-773 each carry phosphotyrosine; by autocatalysis.

The protein belongs to the protein kinase superfamily. Tyr protein kinase family. Fibroblast growth factor receptor subfamily. Post-translationally, ubiquitinated. Subject to proteasomal degradation when not fully glycosylated. Autophosphorylated. Binding of FGF family members together with heparan sulfate proteoglycan or heparin promotes receptor dimerization and autophosphorylation on tyrosine residues. Autophosphorylation occurs in trans between the two FGFR molecules present in the dimer.

It localises to the cell membrane. The protein localises to the endosome. The protein resides in the endoplasmic reticulum. The enzyme catalyses L-tyrosyl-[protein] + ATP = O-phospho-L-tyrosyl-[protein] + ADP + H(+). Its activity is regulated as follows. Present in an inactive conformation in the absence of bound ligand. Ligand binding leads to dimerization and activation by autophosphorylation on tyrosine residues. In terms of biological role, tyrosine-protein kinase that acts as a cell-surface receptor for fibroblast growth factors and plays a role in the regulation of cell proliferation, differentiation and migration, and in regulation of lipid metabolism, bile acid biosynthesis, glucose uptake, vitamin D metabolism and phosphate homeostasis. Required for normal down-regulation of the expression of CYP7A1, the rate-limiting enzyme in bile acid synthesis, in response to FGF19. Phosphorylates PLCG1 and FRS2. Ligand binding leads to the activation of several signaling cascades. Activation of PLCG1 leads to the production of the cellular signaling molecules diacylglycerol and inositol 1,4,5-trisphosphate. Phosphorylation of FRS2 triggers recruitment of GRB2, GAB1, PIK3R1 and SOS1, and mediates activation of RAS, MAPK1/ERK2, MAPK3/ERK1 and the MAP kinase signaling pathway, as well as of the AKT1 signaling pathway. The polypeptide is Fibroblast growth factor receptor 4 (FGFR4) (Pleurodeles waltl (Iberian ribbed newt)).